The chain runs to 212 residues: Large ribosomal subunit protein mL48 (212 aa).

Residues Met1–Thr28 constitute a mitochondrion transit peptide. Lys199 carries the N6-succinyllysine modification.

This sequence belongs to the mitochondrion-specific ribosomal protein mL48 family. In terms of assembly, component of the mitochondrial large ribosomal subunit (mt-LSU). Mature mammalian 55S mitochondrial ribosomes consist of a small (28S) and a large (39S) subunit. The 28S small subunit contains a 12S ribosomal RNA (12S mt-rRNA) and 30 different proteins. The 39S large subunit contains a 16S rRNA (16S mt-rRNA), a copy of mitochondrial valine transfer RNA (mt-tRNA(Val)), which plays an integral structural role, and 52 different proteins. mL48 is located at the central protuberance. Interacts with OXA1L.

Its subcellular location is the mitochondrion. The polypeptide is Large ribosomal subunit protein mL48 (MRPL48) (Homo sapiens (Human)).